A 735-amino-acid chain; its full sequence is Disintegrin and metalloproteinase domain-containing protein 2 (735 aa).

The first 16 residues, 1–16, serve as a signal peptide directing secretion; it reads MWRVLFLLSGLGGLRM. Residues 17–174 constitute a propeptide that is removed on maturation; that stretch reads DSNFDSLPVQ…FKLQSVEPQQ (158 aa). N-linked (GlcNAc...) asparagine glycans are attached at residues asparagine 122 and asparagine 220. Topologically, residues 175-686 are extracellular; the sequence is DFAKYIEMHV…ENIYHSKPMR (512 aa). One can recognise a Peptidase M12B domain in the interval 178–375; that stretch reads KYIEMHVIVE…QKSQCLHNQP (198 aa). 4 disulfides stabilise this stretch: cysteine 287–cysteine 370, cysteine 329–cysteine 354, cysteine 331–cysteine 336, and cysteine 445–cysteine 465. 3 N-linked (GlcNAc...) asparagine glycosylation sites follow: asparagine 353, asparagine 459, and asparagine 566. One can recognise a Disintegrin domain in the interval 384 to 473; that stretch reads QAVCGNAKLE…SCPENHYVQT (90 aa). An EGF-like domain is found at 612–645; the sequence is LGYDCTTDKCNDRGVCNNKKHCHCSASYLPPDCS. 3 disulfides stabilise this stretch: cysteine 616–cysteine 627, cysteine 621–cysteine 633, and cysteine 635–cysteine 644. A helical membrane pass occupies residues 687-707; sequence WPFFLFIPFFIIFCVLIAIMV. At 708 to 735 the chain is on the cytoplasmic side; that stretch reads KVNFQRKKWRTEDYSSDEQPESESEPKG. At serine 729 the chain carries Phosphoserine.

The prodomain and the metalloprotease domain are cleaved during the epididymal maturation of the spermatozoa. As to expression, expressed specifically in spermatogenic cells in the seminiferous cells. Not detected in fetal tissues.

Its subcellular location is the membrane. Functionally, sperm surface membrane protein that may be involved in sperm-egg plasma membrane adhesion and fusion during fertilization. Could have a direct role in sperm-zona binding or migration of sperm from the uterus into the oviduct. Interactions with egg membrane could be mediated via binding between its disintegrin-like domain to one or more integrins receptors on the egg. This is a non catalytic metalloprotease-like protein. The polypeptide is Disintegrin and metalloproteinase domain-containing protein 2 (ADAM2) (Homo sapiens (Human)).